The primary structure comprises 100 residues: Glyceraldehyde-3-phosphate dehydrogenase, testis-specific (100 aa).

NAD(+) contacts are provided by D39 and T64. D-glyceraldehyde 3-phosphate is bound at residue R89.

It belongs to the glyceraldehyde-3-phosphate dehydrogenase family. As to quaternary structure, homotetramer.

It localises to the cytoplasm. The enzyme catalyses D-glyceraldehyde 3-phosphate + phosphate + NAD(+) = (2R)-3-phospho-glyceroyl phosphate + NADH + H(+). It functions in the pathway carbohydrate degradation; glycolysis; pyruvate from D-glyceraldehyde 3-phosphate: step 1/5. Functionally, may play an important role in regulating the switch between different pathways for energy production during spermiogenesis and in the spermatozoon. Required for sperm motility and male fertility. In Mesocricetus auratus (Golden hamster), this protein is Glyceraldehyde-3-phosphate dehydrogenase, testis-specific.